We begin with the raw amino-acid sequence, 156 residues long: ATP synthase subunit b (156 aa).

A helical transmembrane segment spans residues 7–26 (FIGQMVAFAIFIYLTYRYVW).

Belongs to the ATPase B chain family. F-type ATPases have 2 components, F(1) - the catalytic core - and F(0) - the membrane proton channel. F(1) has five subunits: alpha(3), beta(3), gamma(1), delta(1), epsilon(1). F(0) has three main subunits: a(1), b(2) and c(10-14). The alpha and beta chains form an alternating ring which encloses part of the gamma chain. F(1) is attached to F(0) by a central stalk formed by the gamma and epsilon chains, while a peripheral stalk is formed by the delta and b chains.

It is found in the cell inner membrane. Functionally, f(1)F(0) ATP synthase produces ATP from ADP in the presence of a proton or sodium gradient. F-type ATPases consist of two structural domains, F(1) containing the extramembraneous catalytic core and F(0) containing the membrane proton channel, linked together by a central stalk and a peripheral stalk. During catalysis, ATP synthesis in the catalytic domain of F(1) is coupled via a rotary mechanism of the central stalk subunits to proton translocation. In terms of biological role, component of the F(0) channel, it forms part of the peripheral stalk, linking F(1) to F(0). The sequence is that of ATP synthase subunit b from Cellvibrio japonicus (strain Ueda107) (Pseudomonas fluorescens subsp. cellulosa).